The chain runs to 372 residues: Hydrogenase-1 small chain (372 aa).

A signal peptide (tat-type signal) is located at residues 1 to 45 (MNNEETFYQAMRRQGVTRRSFLKYCSLAATSLGLGAGMAPKIAWA). At 46–325 (LENKPRIPVV…PQMGTHSTAD (280 aa)) the chain is on the periplasmic side. Residues cysteine 62, cysteine 65, cysteine 160, cysteine 194, histidine 232, cysteine 235, cysteine 260, and cysteine 266 each contribute to the [4Fe-4S] cluster site. [3Fe-4S] cluster contacts are provided by cysteine 275, cysteine 294, and cysteine 297. Residues 326 to 346 (TVGLTALGVVAAAVGVHAVAS) form a helical membrane-spanning segment. Residues 346 to 372 (SSVDQRRRHNQQPTETEHQPGNEDKQA) form a disordered region. The Cytoplasmic segment spans residues 347-372 (SVDQRRRHNQQPTETEHQPGNEDKQA). Over residues 360–372 (ETEHQPGNEDKQA) the composition is skewed to basic and acidic residues.

The protein belongs to the [NiFe]/[NiFeSe] hydrogenase small subunit family. As to quaternary structure, heterodimer of a large and a small subunit. It depends on [4Fe-4S] cluster as a cofactor. [3Fe-4S] cluster is required as a cofactor. Predicted to be exported by the Tat system. The position of the signal peptide cleavage has not been experimentally proven.

It localises to the cell inner membrane. It carries out the reaction H2 + A = AH2. In terms of biological role, this is one of three S.flexneri hydrogenases synthesized in response to different physiological conditions. HYD1 is believed to have a role in hydrogen cycling during fermentative growth. The polypeptide is Hydrogenase-1 small chain (hyaA) (Shigella flexneri).